A 470-amino-acid polypeptide reads, in one-letter code: Serine--tRNA ligase (470 aa).

272 to 274 (TAE) is an L-serine binding site. 303–305 (RAE) contacts ATP. Glu-326 contacts L-serine. Residue 393–396 (EISS) coordinates ATP. Ser-428 lines the L-serine pocket.

This sequence belongs to the class-II aminoacyl-tRNA synthetase family. Type-1 seryl-tRNA synthetase subfamily. Homodimer. The tRNA molecule binds across the dimer.

Its subcellular location is the cytoplasm. It catalyses the reaction tRNA(Ser) + L-serine + ATP = L-seryl-tRNA(Ser) + AMP + diphosphate + H(+). It carries out the reaction tRNA(Sec) + L-serine + ATP = L-seryl-tRNA(Sec) + AMP + diphosphate + H(+). Its pathway is aminoacyl-tRNA biosynthesis; selenocysteinyl-tRNA(Sec) biosynthesis; L-seryl-tRNA(Sec) from L-serine and tRNA(Sec): step 1/1. In terms of biological role, catalyzes the attachment of serine to tRNA(Ser). Is also able to aminoacylate tRNA(Sec) with serine, to form the misacylated tRNA L-seryl-tRNA(Sec), which will be further converted into selenocysteinyl-tRNA(Sec). The protein is Serine--tRNA ligase of Nitrobacter hamburgensis (strain DSM 10229 / NCIMB 13809 / X14).